Here is a 115-residue protein sequence, read N- to C-terminus: MGTRLLCWAALCLLGAELTEAGVAQSPRYKIIEKRQSVAFWCNPISGHATLYWYQQILGQGPKLLIQFQNNGVVDDSQLPKDRFSAERLKGVDSTLKIQPAKLEDSAVYLCASSL.

Residues Met1–Ala21 form the signal peptide. In terms of domain architecture, Ig-like spans Gly22–Leu115. A disulfide bridge links Cys42 with Cys111.

As to quaternary structure, alpha-beta TR is a heterodimer composed of an alpha and beta chain; disulfide-linked. The alpha-beta TR is associated with the transmembrane signaling CD3 coreceptor proteins to form the TR-CD3 (TcR or TCR). The assembly of alpha-beta TR heterodimers with CD3 occurs in the endoplasmic reticulum where a single alpha-beta TR heterodimer associates with one CD3D-CD3E heterodimer, one CD3G-CD3E heterodimer and one CD247 homodimer forming a stable octameric structure. CD3D-CD3E and CD3G-CD3E heterodimers preferentially associate with TR alpha and TR beta chains, respectively. The association of the CD247 homodimer is the last step of TcR assembly in the endoplasmic reticulum and is required for transport to the cell surface.

The protein localises to the cell membrane. V region of the variable domain of T cell receptor (TR) beta chain that participates in the antigen recognition. Alpha-beta T cell receptors are antigen specific receptors which are essential to the immune response and are present on the cell surface of T lymphocytes. Recognize peptide-major histocompatibility (MH) (pMH) complexes that are displayed by antigen presenting cells (APC), a prerequisite for efficient T cell adaptive immunity against pathogens. Binding of alpha-beta TR to pMH complex initiates TR-CD3 clustering on the cell surface and intracellular activation of LCK that phosphorylates the ITAM motifs of CD3G, CD3D, CD3E and CD247 enabling the recruitment of ZAP70. In turn ZAP70 phosphorylates LAT, which recruits numerous signaling molecules to form the LAT signalosome. The LAT signalosome propagates signal branching to three major signaling pathways, the calcium, the mitogen-activated protein kinase (MAPK) kinase and the nuclear factor NF-kappa-B (NF-kB) pathways, leading to the mobilization of transcription factors that are critical for gene expression and essential for T cell growth and differentiation. The T cell repertoire is generated in the thymus, by V-(D)-J rearrangement. This repertoire is then shaped by intrathymic selection events to generate a peripheral T cell pool of self-MH restricted, non-autoaggressive T cells. Post-thymic interaction of alpha-beta TR with the pMH complexes shapes TR structural and functional avidity. This chain is T cell receptor beta variable 11-2, found in Homo sapiens (Human).